The sequence spans 461 residues: Diaboline synthase (461 aa).

Catalysis depends on proton acceptor residues histidine 185 and aspartate 400.

It belongs to the plant acyltransferase family. In terms of assembly, monomer.

It is found in the cytoplasm. The catalysed reaction is 17,18-epoxy-17-hydroxycur-19-ene + acetyl-CoA = diaboline + CoA. It participates in alkaloid biosynthesis. In terms of biological role, acetyltransferase involved in the biosynthesis of curare monoterpene indole alkaloids (MIAs), natural products such as diaboline, a pharmacologically active compound used to regulate blood pressure. Curare alkaloids act as animal glycine receptor antagonists. Catalyzes the conversion of 17,18-epoxy-17-hydroxycur-19-ene (Wieland-Gumlich aldehyde) to diaboline. In Strychnos sp, this protein is Diaboline synthase.